Reading from the N-terminus, the 203-residue chain is V-type ATP synthase subunit D (203 aa).

Belongs to the V-ATPase D subunit family.

Produces ATP from ADP in the presence of a proton gradient across the membrane. In Thermotoga neapolitana (strain ATCC 49049 / DSM 4359 / NBRC 107923 / NS-E), this protein is V-type ATP synthase subunit D.